We begin with the raw amino-acid sequence, 55 residues long: uncharacterized protein (55 aa).

The signal sequence occupies residues 1–19; the sequence is MQILLVVRLVLLWLGGLSA.

This is an uncharacterized protein from Orgyia pseudotsugata multicapsid polyhedrosis virus (OpMNPV).